Consider the following 137-residue polypeptide: BolA-like protein 1 (137 aa).

A Phosphoserine modification is found at S81. Residues 115 to 137 (RENPQLDISPPCLGGSKKTRGTS) form a disordered region.

This sequence belongs to the BolA/IbaG family. In terms of assembly, interacts with GLRX5.

It localises to the mitochondrion. In terms of biological role, acts as a mitochondrial iron-sulfur (Fe-S) cluster assembly factor that facilitates (Fe-S) cluster insertion into a subset of mitochondrial proteins. Probably acts together with the monothiol glutaredoxin GLRX5. May protect cells against oxidative stress. The polypeptide is BolA-like protein 1 (Bola1) (Mus musculus (Mouse)).